Consider the following 626-residue polypeptide: (+)-3-carene synthase 1, chloroplastic (626 aa).

Residues 1–45 (MSLISAVPLASSCVSKSLISSVREHKALRRAIATLQMSRPGKSVA) constitute a chloroplast transit peptide. Positions 377, 381, and 529 each coordinate Mg(2+). Positions 377–381 (DDMYD) match the DDXXD motif motif.

This sequence belongs to the terpene synthase family. Tpsd subfamily. Mg(2+) is required as a cofactor. The cofactor is Mn(2+).

Its subcellular location is the plastid. It is found in the chloroplast. The enzyme catalyses (2E)-geranyl diphosphate = (+)-car-3-ene + diphosphate. It catalyses the reaction (2E)-geranyl diphosphate = terpinolene + diphosphate. Its pathway is terpene metabolism; oleoresin biosynthesis. It participates in secondary metabolite biosynthesis; terpenoid biosynthesis. Functionally, monoterpene synthase (TPS) involved in the biosynthesis of monoterpene natural products included in conifer oleoresin secretions and volatile emissions; these compounds contribute to biotic and abiotic stress defense against herbivores and pathogens. Catalyzes the conversion of (2E)-geranyl diphosphate (GPP) to (+)-3-carene and, to a lower extent, to terpinolene. The chain is (+)-3-carene synthase 1, chloroplastic from Pinus banksiana (Jack pine).